We begin with the raw amino-acid sequence, 359 residues long: Cinnamyl alcohol dehydrogenase 8 (359 aa).

Cys46 is a binding site for Zn(2+). Ser48 provides a ligand contact to NADP(+). Residues His68, Glu69, Cys99, Cys102, Cys105, Cys113, and Cys162 each coordinate Zn(2+). NADP(+) is bound by residues Thr166, 187-192 (GLGGLG), 210-215 (STSEKK), Thr250, Gly274, and 297-299 (SMI).

The protein belongs to the zinc-containing alcohol dehydrogenase family. Homodimer. The cofactor is Zn(2+). As to expression, expressed in the differentiation and elongation zones of primary and lateral roots. Expressed in the hypocotyl, cotyledon veins, vasculature of the first rosette leaves, hydathodes and trichomes. In stems, expressed in the vascular cambium and developing xylem tissues. Expressed in the style, anthers, stamen filaments, stigmatic regions in flowers, and abscission and style regions of siliques.

It catalyses the reaction (E)-cinnamyl alcohol + NADP(+) = (E)-cinnamaldehyde + NADPH + H(+). It functions in the pathway aromatic compound metabolism; phenylpropanoid biosynthesis. Involved in lignin biosynthesis. Catalyzes the final step specific for the production of lignin monomers. Catalyzes the NADPH-dependent reduction of coniferaldehyde, 5-hydroxyconiferaldehyde, sinapaldehyde, 4-coumaraldehyde and caffeyl aldehyde to their respective alcohols. The chain is Cinnamyl alcohol dehydrogenase 8 (CAD8) from Arabidopsis thaliana (Mouse-ear cress).